The primary structure comprises 478 residues: Glycogen synthase (478 aa).

ADP-alpha-D-glucose is bound at residue K15.

The protein belongs to the glycosyltransferase 1 family. Bacterial/plant glycogen synthase subfamily.

The catalysed reaction is [(1-&gt;4)-alpha-D-glucosyl](n) + ADP-alpha-D-glucose = [(1-&gt;4)-alpha-D-glucosyl](n+1) + ADP + H(+). It functions in the pathway glycan biosynthesis; glycogen biosynthesis. In terms of biological role, synthesizes alpha-1,4-glucan chains using ADP-glucose. The chain is Glycogen synthase from Enterobacter sp. (strain 638).